The following is a 177-amino-acid chain: ADP-ribose 1''-phosphate phosphatase (177 aa).

The region spanning 1–177 (MSNITYVKGN…GDMSFTVYQL (177 aa)) is the Macro domain. Substrate-binding positions include 9–11 (GNI), 24–26 (SCN), 31–36 (WGGGIA), and 147–153 (INSGIFG).

Belongs to the POA1 family.

The catalysed reaction is ADP-alpha-D-ribose 1''-phosphate + H2O = ADP-D-ribose + phosphate. Functionally, highly specific phosphatase involved in the metabolism of ADP-ribose 1''-phosphate (Appr1p) which is produced as a consequence of tRNA splicing. Removes ADP-ribose from glutamate residues in proteins bearing a single ADP-ribose moiety. Inactive towards proteins bearing poly-ADP-ribose. The protein is ADP-ribose 1''-phosphate phosphatase (POA1) of Saccharomyces cerevisiae (strain YJM789) (Baker's yeast).